The primary structure comprises 521 residues: Bifunctional purine biosynthesis protein PurH (521 aa).

The 145-residue stretch at 1–145 (MIKQALISVS…KNHRDVTVVV (145 aa)) folds into the MGS-like domain.

This sequence belongs to the PurH family.

The enzyme catalyses (6R)-10-formyltetrahydrofolate + 5-amino-1-(5-phospho-beta-D-ribosyl)imidazole-4-carboxamide = 5-formamido-1-(5-phospho-D-ribosyl)imidazole-4-carboxamide + (6S)-5,6,7,8-tetrahydrofolate. The catalysed reaction is IMP + H2O = 5-formamido-1-(5-phospho-D-ribosyl)imidazole-4-carboxamide. It functions in the pathway purine metabolism; IMP biosynthesis via de novo pathway; 5-formamido-1-(5-phospho-D-ribosyl)imidazole-4-carboxamide from 5-amino-1-(5-phospho-D-ribosyl)imidazole-4-carboxamide (10-formyl THF route): step 1/1. Its pathway is purine metabolism; IMP biosynthesis via de novo pathway; IMP from 5-formamido-1-(5-phospho-D-ribosyl)imidazole-4-carboxamide: step 1/1. The sequence is that of Bifunctional purine biosynthesis protein PurH from Burkholderia cenocepacia (strain HI2424).